Consider the following 943-residue polypeptide: MEYNFREIEKKWQKIWVDNHTYQVNEDASKQKFYVLNMFPYPSGAGLHVGHPLGYIASDIYARYKRLQGFNVLNPMGYDAYGLPAEQYAIQTGQHPAITTVNNINRYREQLDKIGFSFDWNREIRTCDPEYYHWTQWAFIKMFNSYYCNDEKQARPIEELIEAFSTNGTQGMNVACGEEMDFTADEWNAKSEKEQQEILMNYRIAYLGNTMVNWCPALGTVLANDEVVDGVSERGGYPVIQKVMRQWCLRVSAYAQRLLDGLETVEWTDSLKETQRNWIGRSEGAEMNFKVKDSDIEFTIFTTRADTVFGVTFMVLAPESELVAKLTTPEQKAEVDAYLDRTKKRTERERIADRSVSGVFSGSYAINPLTNEPIPVWISDYVLAGYGTGAIMAVPAHDSRDYAFAKHFNLEIRPLIEGCDVSEESFDAKEGIMMNSPRPGAPEGGLVLNGLTVKEAIAKTKEYIKATGLGRVKVNFRLRDAIFSRQRYWGEPFPVYYKDGMPYMIDESCLPLELPEVAKFLPTETGEPPLGHATKWAWDTVNKCVTDNENIDNRTIFPLELNTMPGFAGSSAYYLRYMDPRNHEALVSPAVDQYWKNVDLYVGGTEHATGHLIYSRFWNKFLHDWGISVAEEPFQKLVNQGMIQGRSNFVYRIKDTNTFVSLNLKDQYEVTPIHVDVNIVSNDILDLEAFKAWRPEYETAEFILEDGKYICGWAVEKMSKSMFNVVNPDMIVEKYGADTLRMYEMFLGPVEQSKPWDTNGIDGVHRFIKKFWSLFYDRNGEYLVKDEPATKEELKALHKLIKKVTGDIEQFSYNTSVSAFMICVNELSSLKCNKKEVLEQLIVVLAPFAPHVCEELWDTLGNTTSVCDAQWPTFNEQYLVEDTVNYTISFNGKARFNMEFPADAASDAIQATVLADERSLKWTEGKTPKKVIVVPKKIVNIVI.

The short motif at 40–51 is the 'HIGH' region element; it reads PYPSGAGLHVGH. Residues 717 to 721 carry the 'KMSKS' region motif; the sequence is KMSKS. K720 is an ATP binding site.

It belongs to the class-I aminoacyl-tRNA synthetase family.

Its subcellular location is the cytoplasm. The enzyme catalyses tRNA(Leu) + L-leucine + ATP = L-leucyl-tRNA(Leu) + AMP + diphosphate. The sequence is that of Leucine--tRNA ligase from Bacteroides fragilis (strain YCH46).